The following is a 143-amino-acid chain: Small ribosomal subunit protein uS11c (143 aa).

It belongs to the universal ribosomal protein uS11 family. As to quaternary structure, part of the 30S ribosomal subunit.

It is found in the plastid. Its subcellular location is the chloroplast. The chain is Small ribosomal subunit protein uS11c from Brachypodium distachyon (Purple false brome).